The chain runs to 772 residues: Cellulosomal-scaffolding protein B (772 aa).

Positions 1-80 (DPSKSFDSAI…TTFVAGGVNL (80 aa)) constitute a Cohesin 1 domain. Residues 81–93 (GSSVPTTQPNVPS) form a linker (Pro/Thr-rich) region. Residues 94–240 (DGVVVEIGKV…VNVGNATPTK (147 aa)) enclose the Cohesin 2 domain. Low complexity predominate over residues 235-276 (NATPTKGATPTNTATPTKSATATPPGHSVPTNTPTNTPANTP). 2 disordered regions span residues 235–277 (NATP…NTPV) and 438–464 (VVPS…PSDD). The linker (Pro/Thr-rich) stretch occupies residues 241–272 (GATPTNTATPTKSATATPPGHSVPTNTPTNTP). The region spanning 277 to 435 (VSGNLKVEFY…GVLVWGKEPG (159 aa)) is the CBM3 domain. Positions 438–461 (VVPSTQPVTTPPATTKPPATTIPP) are enriched in low complexity. The linker (Pro/Thr-rich) stretch occupies residues 440 to 461 (PSTQPVTTPPATTKPPATTIPP). The Cohesin 3 domain occupies 462–607 (SDDPNAIKIK…ETDLINGGVL (146 aa)). Positions 704 to 771 (IMMWVGDIVK…FGATSSDYDA (68 aa)) constitute a Dockerin domain.

In terms of processing, O-glycosylated on most but not all Thr residues of the linker units.

The protein resides in the secreted. Functionally, acts as a scaffolding protein in the cellulosome. It promotes binding of cellulose to the catalytic domains of the cellulolytic enzymes probably through the binding of the nine repeated domains with dockerin domains present in catalytic subunits of the cellulosome. The protein is Cellulosomal-scaffolding protein B (cipB) of Acetivibrio thermocellus (Hungateiclostridium thermocellum).